Consider the following 429-residue polypeptide: Large ribosomal subunit protein mL37 (429 aa).

The transit peptide at 1–29 (MALRPVVLRRAPAHSRGILTRPGPPRPRG) directs the protein to the mitochondrion. The disordered stretch occupies residues 12–45 (PAHSRGILTRPGPPRPRGPLPRTPWTTRGPPPDQ). Residues 22 to 33 (PGPPRPRGPLPR) show a composition bias toward pro residues.

Belongs to the mitochondrion-specific ribosomal protein mL37 family. In terms of assembly, component of the mitochondrial ribosome large subunit (39S) which comprises a 16S rRNA and about 50 distinct proteins.

The protein resides in the mitochondrion. This is Large ribosomal subunit protein mL37 (MRPL37) from Gallus gallus (Chicken).